We begin with the raw amino-acid sequence, 55 residues long: Large ribosomal subunit protein bL33 (55 aa).

Belongs to the bacterial ribosomal protein bL33 family. In terms of assembly, part of the 50S ribosomal subunit. Contacts protein L35.

Functionally, binds the 23S rRNA and the E site tRNA. This chain is Large ribosomal subunit protein bL33 (rpmG), found in Deinococcus radiodurans (strain ATCC 13939 / DSM 20539 / JCM 16871 / CCUG 27074 / LMG 4051 / NBRC 15346 / NCIMB 9279 / VKM B-1422 / R1).